The following is a 77-amino-acid chain: Acyl carrier protein (77 aa).

Residues 1–77 (MSVEAKVKKI…DAIEYIRKKS (77 aa)) form the Carrier domain. At S37 the chain carries O-(pantetheine 4'-phosphoryl)serine.

The protein belongs to the acyl carrier protein (ACP) family. 4'-phosphopantetheine is transferred from CoA to a specific serine of apo-ACP by AcpS. This modification is essential for activity because fatty acids are bound in thioester linkage to the sulfhydryl of the prosthetic group.

It is found in the cytoplasm. Its pathway is lipid metabolism; fatty acid biosynthesis. Functionally, carrier of the growing fatty acid chain in fatty acid biosynthesis. The chain is Acyl carrier protein from Desulforapulum autotrophicum (strain ATCC 43914 / DSM 3382 / VKM B-1955 / HRM2) (Desulfobacterium autotrophicum).